The chain runs to 370 residues: TD and POZ domain-containing protein 4 (370 aa).

Residues 19 to 149 (KLCYRWTISN…DDKFTLLCKV (131 aa)) enclose the MATH domain. The region spanning 188–251 (TDCSLLVAGH…MMGFIYTGKV (64 aa)) is the BTB domain.

The protein belongs to the Tdpoz family.

This Mus musculus (Mouse) protein is TD and POZ domain-containing protein 4.